Here is a 184-residue protein sequence, read N- to C-terminus: Cathelicidin-related peptide Pt_CRAMP1 (184 aa).

The signal sequence occupies residues 1–22; it reads MEGFFWKTWLVVAAFAIGGTSS. A propeptide spanning residues 23–150 is cleaved from the precursor; the sequence is LPHKPLTYEE…EDEKDQPRRV (128 aa). 2 disulfide bridges follow: Cys-81–Cys-92 and Cys-103–Cys-120. Positions 125–144 are enriched in acidic residues; the sequence is EDEEQNQEEEEEEEKEEDEK. Residues 125–147 are disordered; the sequence is EDEEQNQEEEEEEEKEEDEKDQP.

Belongs to the cathelicidin family. As to expression, expressed by the venom gland.

The protein resides in the secreted. It localises to the target cell membrane. Potent antimicrobial peptide against Gram-negative (MIC=2 ug/ml against E.coli ATCC 25922, MIC=8 ug/ml against P.aeruginosa) and Gram-positive bacteria (MIC=32 ug/ml against E.faecalis, MIC=32 ug/ml against S.aureus). Adopts an amphipathic alpha helical conformation, that may allow to partition into the target membrane. High hemolytic activities have been observed on mammalian cells. This Pseudonaja textilis (Eastern brown snake) protein is Cathelicidin-related peptide Pt_CRAMP1.